Consider the following 121-residue polypeptide: uncharacterized protein (121 aa).

Residues S47–S101 form the Cupin type-2 domain.

This is an uncharacterized protein from Aquifex aeolicus (strain VF5).